Consider the following 400-residue polypeptide: Elongation factor Tu 2 (400 aa).

A tr-type G domain is found at Lys10 to Gln209. The tract at residues Gly19 to Thr26 is G1. Residue Gly19 to Thr26 coordinates GTP. Mg(2+) is bound at residue Thr26. A G2 region spans residues Gly60–Asn64. Positions Asp81–Gly84 are G3. GTP is bound by residues Asp81–His85 and Asn136–Asp139. The G4 stretch occupies residues Asn136–Asp139. The interval Ser174–Leu176 is G5.

Belongs to the TRAFAC class translation factor GTPase superfamily. Classic translation factor GTPase family. EF-Tu/EF-1A subfamily. Monomer.

It localises to the cytoplasm. It catalyses the reaction GTP + H2O = GDP + phosphate + H(+). Its function is as follows. GTP hydrolase that promotes the GTP-dependent binding of aminoacyl-tRNA to the A-site of ribosomes during protein biosynthesis. In Syntrophomonas wolfei subsp. wolfei (strain DSM 2245B / Goettingen), this protein is Elongation factor Tu 2.